Reading from the N-terminus, the 377-residue chain is tRNA-specific 2-thiouridylase MnmA (377 aa).

ATP is bound by residues 8–15 and M34; that span reads GMSGGVDS. Residues 94–96 form an interaction with target base in tRNA region; the sequence is NPD. The Nucleophile role is filled by C99. A disulfide bridge links C99 with C201. An ATP-binding site is contributed by G123. The tract at residues 151–153 is interaction with tRNA; the sequence is KDQ. The active-site Cysteine persulfide intermediate is the C201. An interaction with tRNA region spans residues 315-316; the sequence is RY.

It belongs to the MnmA/TRMU family.

The protein resides in the cytoplasm. The catalysed reaction is S-sulfanyl-L-cysteinyl-[protein] + uridine(34) in tRNA + AH2 + ATP = 2-thiouridine(34) in tRNA + L-cysteinyl-[protein] + A + AMP + diphosphate + H(+). Functionally, catalyzes the 2-thiolation of uridine at the wobble position (U34) of tRNA, leading to the formation of s(2)U34. This chain is tRNA-specific 2-thiouridylase MnmA, found in Acinetobacter baumannii (strain ACICU).